The sequence spans 359 residues: Flavonoid 8-O-methyltransferase 1 (359 aa).

Aspartate 223 serves as a coordination point for S-adenosyl-L-methionine. Histidine 261 functions as the Proton acceptor in the catalytic mechanism.

The protein belongs to the class I-like SAM-binding methyltransferase superfamily. Cation-independent O-methyltransferase family. As to expression, expressed in leaves and trichomes, especially in cv. SD and cv. EMX-1, but barely in cv. MC and cv. SW.

It carries out the reaction an 8-hydroxyflavone + S-adenosyl-L-methionine = an 8-methoxyflavone + S-adenosyl-L-homocysteine + H(+). The catalysed reaction is 4',7,8-trihydroxyflavone + S-adenosyl-L-methionine = 4',7-dihydroxy-8-methoxyflavone + S-adenosyl-L-homocysteine + H(+). The enzyme catalyses 7,8-dihydroxyflavone + S-adenosyl-L-methionine = 7-hydroxy-8-methoxyflavone + S-adenosyl-L-homocysteine + H(+). It catalyses the reaction 3',4',7,8-tetrahydroxyflavone + S-adenosyl-L-methionine = 3',4,7-trihydroxy-8-methoxyflavone + S-adenosyl-L-homocysteine + H(+). It functions in the pathway flavonoid metabolism. With respect to regulation, strongly inhibited by gardenin B (GARD B). Its function is as follows. Cation-independent flavonoid 8-O-methyltransferase involved in the biosynthesis of polymethoxylated flavonoids natural products such as nevadensin and salvigenin, aroma compounds which contribute to the flavor of sweet basil, and exhibit pharmacological activities such as anti-allergic, anti-oxidant, antibacterial, anti-proliferative, and anti-inflammatory effects. Catalyzes S-adenosylmethionine-dependent regioselective 8-O-methylation of flavonoids; mediates likely the conversion of pilosin (PIL) to nevadensin (NEV) and of 8-hydroxysalvigenin (8-OH-SALV) to gardenin B (GARD B). Can also use 3',4',7,8-tetrahydroxyflavone as substrate. Accepts other unnatural O-diphenols including 7,8,4'-trihydroxy-flavone and 7-O-methyl-8-hydroxy-flavone, and, with a lower efficiency, 7,8-dihydroxy-flavone, as substrates. The sequence is that of Flavonoid 8-O-methyltransferase 1 from Ocimum basilicum (Sweet basil).